The primary structure comprises 209 residues: High frequency lysogenization protein HflD homolog (209 aa).

It belongs to the HflD family.

It localises to the cytoplasm. The protein resides in the cell inner membrane. This chain is High frequency lysogenization protein HflD homolog, found in Sodalis glossinidius (strain morsitans).